A 639-amino-acid chain; its full sequence is MAPNPPKGTSSRAWDAVTPPLSEWVLEAMSSMGFARMTPVQASAIPLFMAHKDVVVEAVTGSGKTLSFLLPIVEKLLRLEEPIKKHHIGAIIISPTRELASQIHSVMQSLLAFHPPSAAAMTPLDDDDAPRQKFPSSTLKVVPQLLLGGSTTPAEDLSRFLKLSPNVLVSTPGRLLELLSSPHVHCPQSSFEMLVLDEADRLLDLGFKETLQNILRRLPKQRRTGLFSASVSEAVDQIVRVGLRNPVKIMVKVKGTSGVDDKRTPASLQMTYLSTPPLHKFAALKNILSSVQPTPQKSIFFVSTCSGVDYLSAILPLLLGDDFLLIPLHGKHQANVRQKNFNRFLSSHSPAILLTTDVASRGLDIPSVDLVVQIDPPSDPKTFIHRCGRAGRAGRRGLSVVMLHPGREEDYVSFLDVRKTPVVPFSPSISFSDADATSATARARKAVLADRALHDRGQKAFVSWLRSYSKHQASSIFRVADLDWEALGKAWGLLKLPKMPELRSFTGDKTLGVSLDWDNFSYKDKQREKRRKELLQEAAESGVSQPSSNKRRASESVAWSQNAENKNKKLQRREYKKLKQEKTKWENMTEEERQKARETKEMVEELRAKNLEERRFRQAAAKAETAKAGGEDEEFKGFD.

A Q motif motif is present at residues 14 to 42 (WDAVTPPLSEWVLEAMSSMGFARMTPVQA). In terms of domain architecture, Helicase ATP-binding spans 45-249 (IPLFMAHKDV…RVGLRNPVKI (205 aa)). 58 to 65 (AVTGSGKT) is an ATP binding site. The short motif at 197–200 (DEAD) is the DEAD box element. The Helicase C-terminal domain maps to 283–437 (ALKNILSSVQ…SISFSDADAT (155 aa)). Disordered stretches follow at residues 531 to 601 (RKEL…ETKE) and 620 to 639 (AAKAETAKAGGEDEEFKGFD). The stretch at 561–624 (QNAENKNKKL…RFRQAAAKAE (64 aa)) forms a coiled coil. Positions 577 to 601 (KLKQEKTKWENMTEEERQKARETKE) are enriched in basic and acidic residues.

This sequence belongs to the DEAD box helicase family. DDX55/SPB4 subfamily. In terms of assembly, component of pre-60S ribosomal complexes.

It is found in the nucleus. Its subcellular location is the nucleolus. It carries out the reaction ATP + H2O = ADP + phosphate + H(+). Its function is as follows. ATP-binding RNA helicase involved in the biogenesis of 60S ribosomal subunits. Binds 90S pre-ribosomal particles and dissociates from pre-60S ribosomal particles after processing of 27SB pre-rRNA. Required for the normal formation of 18S rRNA through the processing of pre-rRNAs at sites A0, A1 and A2, and the normal formation of 25S and 5.8S rRNAs through the processing of pre-rRNAs at sites C1 and C2. This chain is ATP-dependent rRNA helicase spb4, found in Aspergillus clavatus (strain ATCC 1007 / CBS 513.65 / DSM 816 / NCTC 3887 / NRRL 1 / QM 1276 / 107).